The sequence spans 132 residues: Chemokine-like protein TAFA-5 (132 aa).

An N-terminal signal peptide occupies residues Met1–Gly43. Asn113 carries N-linked (GlcNAc...) asparagine glycosylation.

This sequence belongs to the TAFA family.

Its subcellular location is the secreted. Functionally, acts as a chemokine-like protein by regulating cell proliferation and migration through activation of G protein-coupled receptors (GPCRs), such as S1PR2 and FPR2. Stimulates chemotactic migration of macrophages mediated by the MAPK3/ERK1 and AKT1 pathway. Blocks TNFSF11/RANKL-induced osteoclast formation from macrophages by inhibiting up-regulation of osteoclast fusogenic and differentiation genes. Stimulation of macrophage migration and inhibition of osteoclast formation is mediated through the GPCR FPR2. Acts as an adipokine by negatively regulating vascular smooth muscle cell (VSMC) proliferation and migration in response to platelet-derived growth factor stimulation via GPCR S1PR2 and G protein GNA12/GNA13-transmitted RHOA signaling. Inhibits injury-induced cell proliferation and neointima formation in the femoral arteries. The sequence is that of Chemokine-like protein TAFA-5 (TAFA5) from Bos taurus (Bovine).